The sequence spans 412 residues: Imidazolonepropionase (412 aa).

Positions 76 and 78 each coordinate Fe(3+). Zn(2+)-binding residues include histidine 76 and histidine 78. 4-imidazolone-5-propanoate-binding residues include arginine 85, tyrosine 148, and histidine 181. Tyrosine 148 contributes to the N-formimidoyl-L-glutamate binding site. Histidine 242 provides a ligand contact to Fe(3+). A Zn(2+)-binding site is contributed by histidine 242. Glutamate 245 provides a ligand contact to 4-imidazolone-5-propanoate. Aspartate 317 contacts Fe(3+). Residue aspartate 317 participates in Zn(2+) binding. N-formimidoyl-L-glutamate is bound by residues asparagine 319 and glycine 321. Serine 322 is a 4-imidazolone-5-propanoate binding site.

It belongs to the metallo-dependent hydrolases superfamily. HutI family. Zn(2+) serves as cofactor. Fe(3+) is required as a cofactor.

It localises to the cytoplasm. It carries out the reaction 4-imidazolone-5-propanoate + H2O = N-formimidoyl-L-glutamate. Its pathway is amino-acid degradation; L-histidine degradation into L-glutamate; N-formimidoyl-L-glutamate from L-histidine: step 3/3. In terms of biological role, catalyzes the hydrolytic cleavage of the carbon-nitrogen bond in imidazolone-5-propanoate to yield N-formimidoyl-L-glutamate. It is the third step in the universal histidine degradation pathway. In Staphylococcus saprophyticus subsp. saprophyticus (strain ATCC 15305 / DSM 20229 / NCIMB 8711 / NCTC 7292 / S-41), this protein is Imidazolonepropionase.